A 174-amino-acid polypeptide reads, in one-letter code: NADH-quinone oxidoreductase subunit I (174 aa).

4Fe-4S ferredoxin-type domains follow at residues 44–74 (LNRYPDGLEKCIGCELCAWACPADAIYVEGD) and 90–119 (RVYQINYLRCIGCGLCIEACPTRALTMTND). [4Fe-4S] cluster-binding residues include cysteine 54, cysteine 57, cysteine 60, cysteine 64, cysteine 99, cysteine 102, cysteine 105, and cysteine 109.

The protein belongs to the complex I 23 kDa subunit family. As to quaternary structure, NDH-1 is composed of 14 different subunits. Subunits NuoA, H, J, K, L, M, N constitute the membrane sector of the complex. It depends on [4Fe-4S] cluster as a cofactor.

It localises to the cell membrane. It catalyses the reaction a quinone + NADH + 5 H(+)(in) = a quinol + NAD(+) + 4 H(+)(out). Its function is as follows. NDH-1 shuttles electrons from NADH, via FMN and iron-sulfur (Fe-S) centers, to quinones in the respiratory chain. The immediate electron acceptor for the enzyme in this species is believed to be menaquinone. Couples the redox reaction to proton translocation (for every two electrons transferred, four hydrogen ions are translocated across the cytoplasmic membrane), and thus conserves the redox energy in a proton gradient. The chain is NADH-quinone oxidoreductase subunit I from Mycobacterium sp. (strain KMS).